Here is a 490-residue protein sequence, read N- to C-terminus: UDP-glycosyltransferase 73C7 (490 aa).

Residues Ser-291, 351 to 353, 368 to 376, and 390 to 393 contribute to the UDP-alpha-D-glucose site; these read APQ, HCGWNSTLE, and FAEQ.

This sequence belongs to the UDP-glycosyltransferase family.

The polypeptide is UDP-glycosyltransferase 73C7 (UGT73C7) (Arabidopsis thaliana (Mouse-ear cress)).